The chain runs to 210 residues: High-affinity nitrate transporter 3.1 (210 aa).

A signal peptide spans 1-22; sequence MAIQKILFASLLICSLIQSIHG. Residues 178-198 traverse the membrane as a helical segment; sequence LDIASICFSVFSVVALVVFFV.

It belongs to the NAR2 family. Heterotetramer composed of two NRT2.1 and two NRT3.1. Interacts with NRT2.1 and NRT2.3. Interacts with all other NRT2 transporters, including NRT2.5. Highly expressed in roots. Detected in shoots.

It is found in the cell membrane. Functionally, acts as a dual component transporter with NTR2.1. Required for high-affinity nitrate transport. Acts as a repressor of lateral root initiation. May be involved in targeting NRT2 proteins to the plasma membrane. In Arabidopsis thaliana (Mouse-ear cress), this protein is High-affinity nitrate transporter 3.1 (NRT3.1).